Reading from the N-terminus, the 239-residue chain is Fatty acid metabolism regulator protein (239 aa).

An HTH gntR-type domain is found at 6–74 (QSPAGFAEEY…HGKPTKVNNF (69 aa)). The H-T-H motif DNA-binding region spans 34–53 (ERELSELIGVTRTTLREVLQ).

As to quaternary structure, homodimer.

Its subcellular location is the cytoplasm. Functionally, multifunctional regulator of fatty acid metabolism. This Escherichia fergusonii (strain ATCC 35469 / DSM 13698 / CCUG 18766 / IAM 14443 / JCM 21226 / LMG 7866 / NBRC 102419 / NCTC 12128 / CDC 0568-73) protein is Fatty acid metabolism regulator protein.